A 301-amino-acid chain; its full sequence is 4-hydroxy-tetrahydrodipicolinate synthase (301 aa).

Residue T55 participates in pyruvate binding. The active-site Proton donor/acceptor is Y143. The Schiff-base intermediate with substrate role is filled by K171. Pyruvate is bound at residue I213.

It belongs to the DapA family. As to quaternary structure, homotetramer; dimer of dimers.

The protein localises to the cytoplasm. The enzyme catalyses L-aspartate 4-semialdehyde + pyruvate = (2S,4S)-4-hydroxy-2,3,4,5-tetrahydrodipicolinate + H2O + H(+). Its pathway is amino-acid biosynthesis; L-lysine biosynthesis via DAP pathway; (S)-tetrahydrodipicolinate from L-aspartate: step 3/4. Catalyzes the condensation of (S)-aspartate-beta-semialdehyde [(S)-ASA] and pyruvate to 4-hydroxy-tetrahydrodipicolinate (HTPA). The polypeptide is 4-hydroxy-tetrahydrodipicolinate synthase (Psychrobacter arcticus (strain DSM 17307 / VKM B-2377 / 273-4)).